Reading from the N-terminus, the 543-residue chain is MSSVLPTPVLPTPGRNINRGHFPDDFIFGAGTSSYQIEGAAREGGRGPSIWDTFTHTHPELIQDGSNGDTAINSYNLYKEDIKIVKLMGLDAYRFSISWPRILPGGSINAGINQEGIKYYNNLIDELLANDIVPYVTLFHWDVPQALQDQYDGFLSDKIVDDFRDFAELCFWEFGDRVKNWITINEPESYSNFFGVAYDTPPKAHALKASRLLVPTTVARPSKPVRVFASTADPGTTTADQVYKVGHNLLLAHAAAIQVYRDKFQNTQEGTFGMALVTQWMKPLNENNPADVEAASRAFDFKFGWFMQPLITGEYPKSMRQLLGPRLREFTPDQKKLLIGSYDYVGVNYYTATYVSSAQPPHDKKKAVFHTDGNFYTTDSKDGVLIGPLAGPAWLNIVPEGIYHVLQDIKENYEDPVIYITENGVYEVNDTAKTLSEARVDTTRLHYLQDHLSKVLEARHQGVRVQGYLVWSLMDNWELRAGYTSRFGLIHIDYYNNFARYPKDSAIWFRNAFHKRLRIHVNKARPQEDDGAFDTPRKRLRKY.

Residues Gln36, His140, 185–186 (NE), Tyr350, Glu422, Trp471, and Phe487 each bind a beta-D-glucoside. Glu186 acts as the Proton donor in catalysis. The active-site Nucleophile is the Glu422.

Belongs to the glycosyl hydrolase 1 family. Expressed in roots.

It is found in the cytoplasm. The protein resides in the cytosol. It catalyses the reaction deacetylipecoside + H2O = deacetylipecoside aglycone + D-glucose. The enzyme catalyses deacetylisoipecoside + H2O = deacetylisoipecoside aglycone + D-glucose. It carries out the reaction 6-O-methyldeacetylipecoside + H2O = 6-O-methyldeacetylipecoside aglycone + D-glucose. The catalysed reaction is 6-O-methyldeacetylisoipecoside + H2O = 6-O-methyldeacetylisoipecoside aglycone + D-glucose. It catalyses the reaction ipecoside + H2O = ipecoside aglycone + D-glucose. The enzyme catalyses 3alpha(S)-strictosidine + H2O = strictosidine aglycone + D-glucose. The protein operates within alkaloid biosynthesis. With respect to regulation, inhibited by Cu(2+), Fe(2+) and Zn(2+). Its function is as follows. Beta-glucosidase involved in the biosynthesis of ipecac and benzylisoquinoline monoterpenoid-isoquinoline alkaloids natural products, starting by the condensation of dopamine and secologanin, and including emetine and cephaeline, drugs used both as anti-protozoal (e.g. treatment of ameobiasis) and as emetic agents. In response to pathogen and herbivore attack, triggers the release of toxic ipecoside aglycon to trigger defense responses. Catalyzes deglucosylation both on (1S)-diastereomer and (1R)-diastereomer substrates, including ipecoside, the main alkaloidal glucoside. Also active on N-deacetylisoipecoside, 6-O-methyl-N-deacetylisoipecoside, 6-O-methyl-N-deacetylipecoside and N-deacetylipecoside. In Carapichea ipecacuanha (Ipecac), this protein is Ipecoside beta-D-glucosidase IpeGLU1.